Here is a 291-residue protein sequence, read N- to C-terminus: Lipoyl synthase 1 (291 aa).

[4Fe-4S] cluster is bound by residues Cys-34, Cys-39, Cys-45, Cys-60, Cys-64, Cys-67, and Ser-274. The Radical SAM core domain occupies 46-263; it reads FQAGTATFLI…QVYGEELGFL (218 aa).

This sequence belongs to the radical SAM superfamily. Lipoyl synthase family. Requires [4Fe-4S] cluster as cofactor.

It is found in the cytoplasm. It carries out the reaction [[Fe-S] cluster scaffold protein carrying a second [4Fe-4S](2+) cluster] + N(6)-octanoyl-L-lysyl-[protein] + 2 oxidized [2Fe-2S]-[ferredoxin] + 2 S-adenosyl-L-methionine + 4 H(+) = [[Fe-S] cluster scaffold protein] + N(6)-[(R)-dihydrolipoyl]-L-lysyl-[protein] + 4 Fe(3+) + 2 hydrogen sulfide + 2 5'-deoxyadenosine + 2 L-methionine + 2 reduced [2Fe-2S]-[ferredoxin]. It participates in protein modification; protein lipoylation via endogenous pathway; protein N(6)-(lipoyl)lysine from octanoyl-[acyl-carrier-protein]: step 2/2. Its function is as follows. Catalyzes the radical-mediated insertion of two sulfur atoms into the C-6 and C-8 positions of the octanoyl moiety bound to the lipoyl domains of lipoate-dependent enzymes, thereby converting the octanoylated domains into lipoylated derivatives. The protein is Lipoyl synthase 1 of Nostoc sp. (strain PCC 7120 / SAG 25.82 / UTEX 2576).